A 248-amino-acid chain; its full sequence is Ribonuclease PH (248 aa).

Residues arginine 86 and glycine 124–arginine 126 each bind phosphate.

It belongs to the RNase PH family. As to quaternary structure, homohexameric ring arranged as a trimer of dimers.

The catalysed reaction is tRNA(n+1) + phosphate = tRNA(n) + a ribonucleoside 5'-diphosphate. In terms of biological role, phosphorolytic 3'-5' exoribonuclease that plays an important role in tRNA 3'-end maturation. Removes nucleotide residues following the 3'-CCA terminus of tRNAs; can also add nucleotides to the ends of RNA molecules by using nucleoside diphosphates as substrates, but this may not be physiologically important. Probably plays a role in initiation of 16S rRNA degradation (leading to ribosome degradation) during starvation. The sequence is that of Ribonuclease PH from Listeria welshimeri serovar 6b (strain ATCC 35897 / DSM 20650 / CCUG 15529 / CIP 8149 / NCTC 11857 / SLCC 5334 / V8).